The following is a 429-amino-acid chain: Adenylosuccinate synthetase (429 aa).

GTP is bound by residues 12 to 18 and 40 to 42; these read GDEGKGK and GHT. The Proton acceptor role is filled by Asp-13. Mg(2+) is bound by residues Asp-13 and Gly-40. IMP contacts are provided by residues 13-16, 38-41, Thr-128, Arg-142, Gln-223, Thr-238, and Arg-302; these read DEGK and NAGH. His-41 (proton donor) is an active-site residue. 298–304 lines the substrate pocket; it reads VNTGRPR. Residues Arg-304, 330–332, and 412–414 contribute to the GTP site; these read KLD and GVG.

This sequence belongs to the adenylosuccinate synthetase family. As to quaternary structure, homodimer. Requires Mg(2+) as cofactor.

It is found in the cytoplasm. The catalysed reaction is IMP + L-aspartate + GTP = N(6)-(1,2-dicarboxyethyl)-AMP + GDP + phosphate + 2 H(+). It functions in the pathway purine metabolism; AMP biosynthesis via de novo pathway; AMP from IMP: step 1/2. In terms of biological role, plays an important role in the de novo pathway of purine nucleotide biosynthesis. Catalyzes the first committed step in the biosynthesis of AMP from IMP. The polypeptide is Adenylosuccinate synthetase (Pseudarthrobacter chlorophenolicus (strain ATCC 700700 / DSM 12829 / CIP 107037 / JCM 12360 / KCTC 9906 / NCIMB 13794 / A6) (Arthrobacter chlorophenolicus)).